The chain runs to 575 residues: MAETTPSRPNDTPENSPGGGDDNQSQSAGQSKNPASVKDRKCQYCHQAFTSSSLGRHLDQYLFKKKPDGVHDVEEIRRIRSGITRRQARTSSGKRDTPERAMGKGPSEHFAGGEYGAKPREGAIRMMFNTPTWHATGVINDIPNPGQTPEGSRFATSQSRTGVIHLPDYASRGASAKDPDTMRALELALREVLDNIKAATSRMRPRLSPFDFDIQSETFPSLCLRLLPPPPSLFSTNPFPSPSSFPLKPPGVEHLDIVRQAIRAKIDQWQSDQLSTQSANNSPGRPPLGLDANMISRSAQQHEDMSLRHLELAFKHWASLPPETRLEAWHLEITRAFAREVEKRKTLDEQLARVQQEANQLRAQVEKLGSCQWPREFALFPPDTLPLPPAVARELDAKESQISPGSPRWDYDSVVAKWKRVVMHDKSMGRVGVGYGNPPLDDRSSADTKARATEEPPASAALASTSTSAPPSAHPPPRALQPAPGPALAASPDQSSSHTGGASAPSSQNTSPYLRSPQAGPQAKRPRLMNGADGGHTSAANPSATAPNTWNPHSHQSLPGSNLASASGPPPSSGA.

Polar residues-rich tracts occupy residues 1 to 15 (MAET…TPEN) and 22 to 34 (DNQS…SKNP). Disordered stretches follow at residues 1–40 (MAET…VKDR) and 79–114 (IRSG…AGGE). The UBZ4-type; degenerate zinc-finger motif lies at 39 to 66 (DRKCQYCHQAFTSSSLGRHLDQYLFKKK). A compositionally biased stretch (basic and acidic residues) spans 93 to 102 (GKRDTPERAM). Residues 337–371 (FAREVEKRKTLDEQLARVQQEANQLRAQVEKLGSC) adopt a coiled-coil conformation. The interval 429-575 (GRVGVGYGNP…ASGPPPSSGA (147 aa)) is disordered. Positions 440–454 (LDDRSSADTKARATE) are enriched in basic and acidic residues. The span at 455 to 471 (EPPASAALASTSTSAPP) shows a compositional bias: low complexity. Pro residues predominate over residues 472–485 (SAHPPPRALQPAPG). 2 stretches are compositionally biased toward polar residues: residues 493-513 (DQSS…TSPY) and 538-558 (SAAN…HQSL).

As to quaternary structure, interacts with atrR.

Its subcellular location is the nucleus. Functionally, transcription factor required for normal voriconazole resistance. Contributes to the function of atrR and regulates the expression of the atrR target gene abcG1. The protein is Transcription factor ncaA of Aspergillus fumigatus (strain ATCC MYA-4609 / CBS 101355 / FGSC A1100 / Af293) (Neosartorya fumigata).